The chain runs to 376 residues: Sulfate/thiosulfate import ATP-binding protein CysA 1 (376 aa).

An ABC transporter domain is found at 3 to 237 (IRLTNISKKF…PNSRFVFDFL (235 aa)). 35-42 (GPSGSGKT) serves as a coordination point for ATP.

This sequence belongs to the ABC transporter superfamily. Sulfate/tungstate importer (TC 3.A.1.6) family. In terms of assembly, the complex is composed of two ATP-binding proteins (CysA), two transmembrane proteins (CysT and CysW) and a solute-binding protein (CysP).

It is found in the cell inner membrane. The enzyme catalyses sulfate(out) + ATP + H2O = sulfate(in) + ADP + phosphate + H(+). It catalyses the reaction thiosulfate(out) + ATP + H2O = thiosulfate(in) + ADP + phosphate + H(+). Part of the ABC transporter complex CysAWTP involved in sulfate/thiosulfate import. Responsible for energy coupling to the transport system. This Shewanella oneidensis (strain ATCC 700550 / JCM 31522 / CIP 106686 / LMG 19005 / NCIMB 14063 / MR-1) protein is Sulfate/thiosulfate import ATP-binding protein CysA 1.